A 90-amino-acid polypeptide reads, in one-letter code: Small ribosomal subunit protein uS19 (90 aa).

Belongs to the universal ribosomal protein uS19 family.

Its function is as follows. Protein S19 forms a complex with S13 that binds strongly to the 16S ribosomal RNA. The chain is Small ribosomal subunit protein uS19 from Rhizorhabdus wittichii (strain DSM 6014 / CCUG 31198 / JCM 15750 / NBRC 105917 / EY 4224 / RW1) (Sphingomonas wittichii).